We begin with the raw amino-acid sequence, 145 residues long: Putative pre-16S rRNA nuclease (145 aa).

Belongs to the YqgF nuclease family.

The protein resides in the cytoplasm. In terms of biological role, could be a nuclease involved in processing of the 5'-end of pre-16S rRNA. This is Putative pre-16S rRNA nuclease from Microcystis aeruginosa (strain NIES-843 / IAM M-2473).